Consider the following 860-residue polypeptide: MQEQYRPDLLEQEVQKYWQNNQTFKAVKDSSKEKYYCLSMFPYPSGRLHMGHVRNYTIADVVSRYQRMNGKNVLQPVGWDAFGLPAEGAAVKNKTAPAKWTYENIDYMKNQLKMLGFSYDWDREIATCKPEYYKWEQWFFTELYKKGLVYKKTSVVNWCPNDETVLANEQVHEGCCWRCDTPVEQKEIPQWFIKITDYAEQLLSGLDTLPEWPDMVKTMQRNWIGRSEGVEITFKIENSDETVAVYTTRPDTFYGVSYMAVAAGHPLAEKAAQNNAELARFIQECKNTKVAEAELATMEKKGMATGINAIHPITGKPVPVWVANFVLMHYGTGAVMAVPAHDQRDFEFATKYGLPIKQVIAPMNGEEIDLTKAAFTEHGKLVNSAEFDGLDFEAAFNGIADKLEKMGVGKRQVNYRLRDWGVSRQRYWGAPIPMLTLENGDVVPAPLQDLPIVLPEDVVMDGVKSPIKADPDWAKTSYNGQPALKETDTFDTFMESSWYYARYTSPQYHEGMLDSDEANYWLPVDQYIGGIEHATMHLLYFRFFHKLLRDAGLVSTDEPTKKLLCQGMVLADAFYYTSPTNERIWVSPTKVMLERDEKGRILKATDDEGHELVHAGMTKMSKSKNNGIDPQEMVEKYGADTVRLFMMFASPAEMTLEWQESGVEGAKRFLGRLWNLVFEYNKNPVKTAPNPTALSSAQKALRRDVHKTIAKVSDDIGRRQTFNTAIAAIMELMNKLTRAPLTDEQDRAVMGEALSAVVRMLYPITPHICFQLWKDLGNEDIIDFAPWVQADEAAMIDDEKLVVVQVNGKVRGKITVPADMAEEEIKRVALAEENVQKFLDGLNIVKVIYVPGKLLSFVAK.

Residues 42–52 (PYPSGRLHMGH) carry the 'HIGH' region motif. The short motif at 619–623 (KMSKS) is the 'KMSKS' region element. Lysine 622 is an ATP binding site.

Belongs to the class-I aminoacyl-tRNA synthetase family.

The protein localises to the cytoplasm. It catalyses the reaction tRNA(Leu) + L-leucine + ATP = L-leucyl-tRNA(Leu) + AMP + diphosphate. The protein is Leucine--tRNA ligase of Mannheimia succiniciproducens (strain KCTC 0769BP / MBEL55E).